Here is a 92-residue protein sequence, read N- to C-terminus: MTKRTKKAGIVGKYGTRYGASLRKQIKKMEVSQHSKYFCEFCGKFAVKRKAVGIWGCKDCGKVKAGGAYTMNTASAVTVRSTIRRLREQTEA.

The C4-type zinc finger occupies C39–C60.

It belongs to the eukaryotic ribosomal protein eL43 family.

The protein is Large ribosomal subunit protein eL43z of Oryza sativa subsp. japonica (Rice).